A 282-amino-acid chain; its full sequence is Biotin synthase (282 aa).

In terms of domain architecture, Radical SAM core spans 1–228; the sequence is MQEIFLCSIS…NARLMVAGGR (228 aa). Positions 17, 21, and 24 each coordinate [4Fe-4S] cluster. 4 residues coordinate [2Fe-2S] cluster: cysteine 61, cysteine 96, cysteine 154, and arginine 221.

The protein belongs to the radical SAM superfamily. Biotin synthase family. As to quaternary structure, homodimer. [4Fe-4S] cluster serves as cofactor. The cofactor is [2Fe-2S] cluster.

It catalyses the reaction (4R,5S)-dethiobiotin + (sulfur carrier)-SH + 2 reduced [2Fe-2S]-[ferredoxin] + 2 S-adenosyl-L-methionine = (sulfur carrier)-H + biotin + 2 5'-deoxyadenosine + 2 L-methionine + 2 oxidized [2Fe-2S]-[ferredoxin]. It participates in cofactor biosynthesis; biotin biosynthesis; biotin from 7,8-diaminononanoate: step 2/2. Catalyzes the conversion of dethiobiotin (DTB) to biotin by the insertion of a sulfur atom into dethiobiotin via a radical-based mechanism. In Helicobacter pylori (strain Shi470), this protein is Biotin synthase.